A 77-amino-acid polypeptide reads, in one-letter code: MADTYKPADLRAKSEDELNALLLDLKREQINHRFSAATGQSENTSRVKVVRRAVARIKTLAHQSKNRAGAKTSAAKS.

This sequence belongs to the universal ribosomal protein uL29 family.

The sequence is that of Large ribosomal subunit protein uL29 from Gluconobacter oxydans (strain 621H) (Gluconobacter suboxydans).